Reading from the N-terminus, the 147-residue chain is MISSAATFRQHQEILVIATQGKSLHNFNSKIQAVVQHSGVKTGLCTVFVRHTSASLIIQENADPDVLTDLAIFFAQLVPEDGRRYRHSTEGLDDMPAHIRSALTKTSEHIPIVNGRLGLGTWQGVFLWEHRQRPHQREVIVHVSGEV.

This sequence belongs to the UPF0047 family.

The protein is UPF0047 protein sll1880 of Synechocystis sp. (strain ATCC 27184 / PCC 6803 / Kazusa).